A 107-amino-acid polypeptide reads, in one-letter code: Large ribosomal subunit protein bL21 (107 aa).

This sequence belongs to the bacterial ribosomal protein bL21 family. As to quaternary structure, part of the 50S ribosomal subunit. Contacts protein L20.

Functionally, this protein binds to 23S rRNA in the presence of protein L20. The chain is Large ribosomal subunit protein bL21 from Chlamydia trachomatis serovar L2 (strain ATCC VR-902B / DSM 19102 / 434/Bu).